A 388-amino-acid polypeptide reads, in one-letter code: Biotin synthase (388 aa).

The Radical SAM core domain occupies 47 to 277; that stretch reads WFGRRVKLNY…DVEVRIAGGR (231 aa). Positions 65, 69, and 72 each coordinate [4Fe-4S] cluster. Positions 109, 142, 202, and 272 each coordinate [2Fe-2S] cluster. Positions 335–371 are disordered; it reads APAGGCGSEQSAGCGSHEGGGACGSAPAPRTDEARTD.

It belongs to the radical SAM superfamily. Biotin synthase family. As to quaternary structure, homodimer. Requires [4Fe-4S] cluster as cofactor. [2Fe-2S] cluster is required as a cofactor.

The enzyme catalyses (4R,5S)-dethiobiotin + (sulfur carrier)-SH + 2 reduced [2Fe-2S]-[ferredoxin] + 2 S-adenosyl-L-methionine = (sulfur carrier)-H + biotin + 2 5'-deoxyadenosine + 2 L-methionine + 2 oxidized [2Fe-2S]-[ferredoxin]. The protein operates within cofactor biosynthesis; biotin biosynthesis; biotin from 7,8-diaminononanoate: step 2/2. Functionally, catalyzes the conversion of dethiobiotin (DTB) to biotin by the insertion of a sulfur atom into dethiobiotin via a radical-based mechanism. In Streptomyces avermitilis (strain ATCC 31267 / DSM 46492 / JCM 5070 / NBRC 14893 / NCIMB 12804 / NRRL 8165 / MA-4680), this protein is Biotin synthase.